Reading from the N-terminus, the 98-residue chain is DNA/RNA-binding protein Alba (98 aa).

At lysine 16 the chain carries N6-acetyllysine.

This sequence belongs to the histone-like Alba family. Post-translationally, acetylated. Acetylation at Lys-16 decreases DNA-binding affinity.

Its subcellular location is the cytoplasm. It localises to the chromosome. In terms of biological role, binds double-stranded DNA tightly but without sequence specificity. Involved in DNA compaction. This Metallosphaera sedula (strain ATCC 51363 / DSM 5348 / JCM 9185 / NBRC 15509 / TH2) protein is DNA/RNA-binding protein Alba.